The primary structure comprises 1588 residues: Ubiquitin carboxyl-terminal hydrolase 54 (1588 aa).

The residue at position 12 (R12) is an Omega-N-methylarginine. The 322-residue stretch at 31-352 (KGLSNEPGQN…QPLLLLYADP (322 aa)) folds into the USP domain. C42 serves as the catalytic Nucleophile. Residues H67, C69, C74, C77, H133, C145, C150, H153, C166, C169, C225, and C229 each contribute to the Zn(2+) site. H302 serves as the catalytic Proton acceptor. Basic and acidic residues-rich tracts occupy residues 380-391 (DSGHLTDSECNQ) and 424-434 (SEGETLKEKQA). Disordered stretches follow at residues 380 to 447 (DSGH…TSRL) and 459 to 519 (HSRP…PTWR). S424 is subject to Phosphoserine. Polar residues-rich tracts occupy residues 436-445 (RNASKSSSTS) and 459-471 (HSRP…TNAA). Over residues 499–512 (TESTSSEARSSSSS) the composition is skewed to low complexity. A phosphoserine mark is found at S574, S613, and S616. Residues 601-616 (ESGYESSERNSSSPVS) are compositionally biased toward low complexity. Residues 601 to 620 (ESGYESSERNSSSPVSLDAA) form a disordered region. Residues 678-712 (TSKSELDELQEEVARRAQEQELRKKREKELEAAKG) adopt a coiled-coil conformation. Disordered regions lie at residues 801–839 (RSLQ…EQSV), 856–895 (DSEL…SPPG), 950–969 (EDNS…TTQD), 1093–1172 (TRDV…SRRR), and 1525–1562 (GSVL…SAGE). The span at 808 to 825 (QQQPPSQQPVQPSASLPS) shows a compositional bias: low complexity. Residues 878-895 (SLVSPSPAQSVSQHSPPG) show a composition bias toward polar residues. S1138 carries the phosphoserine modification. Basic and acidic residues predominate over residues 1536 to 1547 (RRIDVPPDDDGR).

This sequence belongs to the peptidase C19 family.

The enzyme catalyses Thiol-dependent hydrolysis of ester, thioester, amide, peptide and isopeptide bonds formed by the C-terminal Gly of ubiquitin (a 76-residue protein attached to proteins as an intracellular targeting signal).. Deubiquitinase that specifically mediates 'Lys-63'-linked deubiquitination of substrates with a polyubiquitin chain composed of at least 3 ubiquitins. Specifically recognizes ubiquitin chain in position S2 and catalyzes cleavage of polyubiquitin within 'Lys-63'-linked chains. Not able to deubiquitinate substrates with shorter ubiquitin chains. Mediates deubiquitination of PLK4, maintaining PLK4 stability by reducing its ubiquitination-mediated degradation. The sequence is that of Ubiquitin carboxyl-terminal hydrolase 54 (Usp54) from Rattus norvegicus (Rat).